The sequence spans 159 residues: Protein B1 (159 aa).

Positions 1-15 (MQKNMKTKKTKKRGR) are enriched in basic residues. 2 disordered regions span residues 1-100 (MQKN…RTRE) and 133-159 (PGHG…DPPR). The span at 16-31 (KEGNTPETERRMEPAR) shows a compositional bias: basic and acidic residues. Basic residues predominate over residues 85–96 (RGRHIHTRGART).

The chain is Protein B1 (B1) from Human herpesvirus 6B (strain Z29) (HHV-6 variant B).